The primary structure comprises 196 residues: Peptidoglycan recognition protein (196 aa).

An N-terminal signal peptide occupies residues 1-23 (MARLHSAVVLALALSSLLTEIAA). 2 cysteine pairs are disulfide-bonded: Cys25-Cys147 and Cys61-Cys67. The N-acetylmuramoyl-L-alanine amidase domain maps to 46–173 (RPVSLVIVQH…RQLIASESPG (128 aa)).

It belongs to the N-acetylmuramoyl-L-alanine amidase 2 family. Monomer. As to expression, constitutively expressed in fat body, epithelial cells and hemocytes. Not detected in Malpighian tubules, silk gland or midgut.

Its function is as follows. Binds specifically to peptidoglycan and triggers the propenoloxidase cascade which is an important insect defense mechanism. The chain is Peptidoglycan recognition protein from Bombyx mori (Silk moth).